Consider the following 355-residue polypeptide: Histidinol-phosphate aminotransferase (355 aa).

At Lys-214 the chain carries N6-(pyridoxal phosphate)lysine.

Belongs to the class-II pyridoxal-phosphate-dependent aminotransferase family. Histidinol-phosphate aminotransferase subfamily. In terms of assembly, homodimer. Pyridoxal 5'-phosphate is required as a cofactor.

It catalyses the reaction L-histidinol phosphate + 2-oxoglutarate = 3-(imidazol-4-yl)-2-oxopropyl phosphate + L-glutamate. The protein operates within amino-acid biosynthesis; L-histidine biosynthesis; L-histidine from 5-phospho-alpha-D-ribose 1-diphosphate: step 7/9. The protein is Histidinol-phosphate aminotransferase (hisC) of Buchnera aphidicola subsp. Schizaphis graminum (strain Sg).